The primary structure comprises 112 residues: Putative inner membrane protein YafU (112 aa).

At Met1–Ala21 the chain is on the cytoplasmic side. Residues Val22–Phe42 form a helical membrane-spanning segment. Position 43 (Gly43) is a topological domain, periplasmic. Residues Phe44–Leu64 traverse the membrane as a helical segment. Topologically, residues Asn65–Ile112 are cytoplasmic.

The protein localises to the cell inner membrane. This Escherichia coli (strain K12) protein is Putative inner membrane protein YafU (yafU).